The chain runs to 67 residues: DNA-directed RNA polymerase subunit omega (67 aa).

The protein belongs to the RNA polymerase subunit omega family. As to quaternary structure, the RNAP catalytic core consists of 2 alpha, 1 beta, 1 beta' and 1 omega subunit. When a sigma factor is associated with the core the holoenzyme is formed, which can initiate transcription.

The enzyme catalyses RNA(n) + a ribonucleoside 5'-triphosphate = RNA(n+1) + diphosphate. Its function is as follows. Promotes RNA polymerase assembly. Latches the N- and C-terminal regions of the beta' subunit thereby facilitating its interaction with the beta and alpha subunits. The chain is DNA-directed RNA polymerase subunit omega from Paraburkholderia phymatum (strain DSM 17167 / CIP 108236 / LMG 21445 / STM815) (Burkholderia phymatum).